A 279-amino-acid polypeptide reads, in one-letter code: Thymidylate synthase (279 aa).

Position 133–134 (133–134) interacts with dUMP; the sequence is RR. Cys154 functions as the Nucleophile in the catalytic mechanism. Residues 178 to 181, Asn189, and 219 to 221 contribute to the dUMP site; these read RSND and HIY. Asp181 provides a ligand contact to (6R)-5,10-methylene-5,6,7,8-tetrahydrofolate. Residue Ala278 participates in (6R)-5,10-methylene-5,6,7,8-tetrahydrofolate binding.

This sequence belongs to the thymidylate synthase family. Bacterial-type ThyA subfamily. Homodimer.

It is found in the cytoplasm. It catalyses the reaction dUMP + (6R)-5,10-methylene-5,6,7,8-tetrahydrofolate = 7,8-dihydrofolate + dTMP. Its pathway is pyrimidine metabolism; dTTP biosynthesis. Its function is as follows. Catalyzes the reductive methylation of 2'-deoxyuridine-5'-monophosphate (dUMP) to 2'-deoxythymidine-5'-monophosphate (dTMP) while utilizing 5,10-methylenetetrahydrofolate (mTHF) as the methyl donor and reductant in the reaction, yielding dihydrofolate (DHF) as a by-product. This enzymatic reaction provides an intracellular de novo source of dTMP, an essential precursor for DNA biosynthesis. The chain is Thymidylate synthase from Streptococcus pyogenes serotype M3 (strain SSI-1).